The following is a 644-amino-acid chain: uncharacterized protein (644 aa).

The disordered stretch occupies residues 65 to 117 (DSDVETTGGGGRGSTTSTEDRIDEHDDAIEDDGVSNEEDENQDAEQEQEVDLN). The segment covering 89–114 (HDDAIEDDGVSNEEDENQDAEQEQEV) has biased composition (acidic residues).

This is an uncharacterized protein from Arabidopsis thaliana (Mouse-ear cress).